The sequence spans 277 residues: Phosphonates import ATP-binding protein PhnC 2 (277 aa).

The region spanning 5 to 253 (IHVQGLNKTF…FLNDLYGADA (249 aa)) is the ABC transporter domain. An ATP-binding site is contributed by 37–44 (GASGSGKS).

This sequence belongs to the ABC transporter superfamily. Phosphonates importer (TC 3.A.1.9.1) family. In terms of assembly, the complex is composed of two ATP-binding proteins (PhnC), two transmembrane proteins (PhnE) and a solute-binding protein (PhnD).

It localises to the cell inner membrane. It carries out the reaction phosphonate(out) + ATP + H2O = phosphonate(in) + ADP + phosphate + H(+). In terms of biological role, part of the ABC transporter complex PhnCDE involved in phosphonates import. Responsible for energy coupling to the transport system. This chain is Phosphonates import ATP-binding protein PhnC 2, found in Pseudomonas savastanoi pv. phaseolicola (strain 1448A / Race 6) (Pseudomonas syringae pv. phaseolicola (strain 1448A / Race 6)).